The sequence spans 420 residues: Gamma-glutamyl phosphate reductase (420 aa).

Belongs to the gamma-glutamyl phosphate reductase family.

It localises to the cytoplasm. It carries out the reaction L-glutamate 5-semialdehyde + phosphate + NADP(+) = L-glutamyl 5-phosphate + NADPH + H(+). It participates in amino-acid biosynthesis; L-proline biosynthesis; L-glutamate 5-semialdehyde from L-glutamate: step 2/2. Catalyzes the NADPH-dependent reduction of L-glutamate 5-phosphate into L-glutamate 5-semialdehyde and phosphate. The product spontaneously undergoes cyclization to form 1-pyrroline-5-carboxylate. This is Gamma-glutamyl phosphate reductase from Streptococcus pneumoniae (strain ATCC 700669 / Spain 23F-1).